A 155-amino-acid polypeptide reads, in one-letter code: Transcriptional repressor NrdR (155 aa).

A zinc finger lies at 3 to 34; sequence CPFCNQTDTKVIDSRLVADGVQVRRRRECQAC. One can recognise an ATP-cone domain in the interval 49–139; it reads PKVIKQDGTR…VYRSFQDISE (91 aa).

Belongs to the NrdR family. The cofactor is Zn(2+).

Its function is as follows. Negatively regulates transcription of bacterial ribonucleotide reductase nrd genes and operons by binding to NrdR-boxes. The sequence is that of Transcriptional repressor NrdR from Teredinibacter turnerae (strain ATCC 39867 / T7901).